The chain runs to 136 residues: Small ribosomal subunit protein uS19 (136 aa).

Positions 114–136 are disordered; sequence RSRVSHGSAGVGATRSSKFVPLK.

Belongs to the universal ribosomal protein uS19 family.

Its function is as follows. Protein S19 forms a complex with S13 that binds strongly to the 16S ribosomal RNA. This Methanosarcina barkeri (strain Fusaro / DSM 804) protein is Small ribosomal subunit protein uS19.